Consider the following 210-residue polypeptide: Orotate phosphoribosyltransferase (210 aa).

Residues arginine 94, lysine 98, histidine 100, and 120 to 128 (EDLISTGGS) contribute to the 5-phospho-alpha-D-ribose 1-diphosphate site. Serine 124 serves as a coordination point for orotate.

Belongs to the purine/pyrimidine phosphoribosyltransferase family. PyrE subfamily. As to quaternary structure, homodimer. Mg(2+) serves as cofactor.

The enzyme catalyses orotidine 5'-phosphate + diphosphate = orotate + 5-phospho-alpha-D-ribose 1-diphosphate. Its pathway is pyrimidine metabolism; UMP biosynthesis via de novo pathway; UMP from orotate: step 1/2. Its function is as follows. Catalyzes the transfer of a ribosyl phosphate group from 5-phosphoribose 1-diphosphate to orotate, leading to the formation of orotidine monophosphate (OMP). The sequence is that of Orotate phosphoribosyltransferase from Bacillus cereus (strain ATCC 14579 / DSM 31 / CCUG 7414 / JCM 2152 / NBRC 15305 / NCIMB 9373 / NCTC 2599 / NRRL B-3711).